A 415-amino-acid polypeptide reads, in one-letter code: Peptide chain release factor subunit 1 (415 aa).

The protein belongs to the eukaryotic release factor 1 family. In terms of assembly, heterodimer of two subunits, one of which binds GTP.

It localises to the cytoplasm. Its function is as follows. Directs the termination of nascent peptide synthesis (translation) in response to the termination codons UAA, UAG and UGA. This is Peptide chain release factor subunit 1 from Methanosarcina mazei (strain ATCC BAA-159 / DSM 3647 / Goe1 / Go1 / JCM 11833 / OCM 88) (Methanosarcina frisia).